Reading from the N-terminus, the 669-residue chain is 5-taurinomethyluridine-[tRNA] synthase subunit MTO1, mitochondrial (669 aa).

The N-terminal 25 residues, 1–25, are a transit peptide targeting the mitochondrion; sequence MFLLRGRGHWAAASLGRRLPLRRLR. FAD contacts are provided by residues 42 to 47, Val154, Ser217, and Gln406; that span reads GGGHAG. At Lys507 the chain carries N6-methyllysine.

The protein belongs to the MnmG family. As to quaternary structure, homodimer; forms a dimer in the presence of potassium. Interacts with GTPBP3; forms the GTPBP3-MTO1 complex composed of homodimers of GTPBP3 and MTO1. The cofactor is FAD. Ubiquitously expressed in various tissues, but with markedly elevated expression in tissues of high metabolic rates.

It localises to the mitochondrion. It carries out the reaction 5,10-methylenetetrahydrofolate + uridine(34) in tRNA + taurine + GTP + A + H2O = 5-taurinomethyluridine(34) in tRNA + 7,8-dihydrofolate + GDP + AH2 + phosphate + H(+). In terms of biological role, component of the GTPBP3-MTO1 complex that catalyzes the 5-taurinomethyluridine (taum(5)U) modification at the 34th wobble position (U34) of mitochondrial tRNAs (mt-tRNAs), which plays a role in mt-tRNA decoding and mitochondrial translation. Taum(5)U formation on mammalian mt-tRNA requires the presence of both GTPBP3-mediated GTPase activity and MTO1 catalytic activity. The protein is 5-taurinomethyluridine-[tRNA] synthase subunit MTO1, mitochondrial of Mus musculus (Mouse).